Consider the following 1496-residue polypeptide: Synaptojanin-2 (1496 aa).

The SAC domain occupies 120-444; that stretch reads LKKILSSGVF…GHSLSKVFTG (325 aa). The RRM domain occupies 889 to 968; sequence DATVVVNLQS…RAVKIRPKTK (80 aa). Disordered stretches follow at residues 1027–1073, 1085–1166, 1190–1405, and 1427–1473; these read NQPG…DDAD, GEFR…YNVK, ASEE…PEAA, and NTWL…KTLG. A compositionally biased stretch (pro residues) spans 1101–1115; that stretch reads RPRPPQPPQRPPPPT. Phosphoserine occurs at positions 1124 and 1191. Positions 1124–1140 are enriched in polar residues; sequence SDASISSGTHGQYSILQ. Composition is skewed to pro residues over residues 1221-1235 and 1319-1332; these read PQAP…PPRV and VPPP…VPKV. Low complexity predominate over residues 1340–1359; it reads APAAFHLQVLQSNSQLLQGL. 2 stretches are compositionally biased toward polar residues: residues 1383-1394 and 1427-1442; these read FLSTSSATSPDS and NTWL…SGTR.

It belongs to the synaptojanin family. In the central section; belongs to the inositol 1,4,5-trisphosphate 5-phosphatase family. Binds to GRB2. Isoform 2A binds to SYNJ2BP/OMP25. Isoform 2B2 C-terminal proline-rich region binds to a variety of SH3 domain-containing proteins including SH3GL1, SH3GL2, SH3GL3 and GRB2.

Its subcellular location is the cytoplasm. It is found in the cell membrane. The protein localises to the membrane raft. It localises to the presynapse. The protein resides in the cytoskeleton. It carries out the reaction a 1,2-diacyl-sn-glycero-3-phospho-(1D-myo-inositol-4,5-bisphosphate) + H2O = a 1,2-diacyl-sn-glycero-3-phospho-(1D-myo-inositol 4-phosphate) + phosphate. Its function is as follows. Inositol 5-phosphatase which may be involved in distinct membrane trafficking and signal transduction pathways. May mediate the inhibitory effect of Rac1 on endocytosis. In Homo sapiens (Human), this protein is Synaptojanin-2 (SYNJ2).